Reading from the N-terminus, the 490-residue chain is ATP synthase subunit beta (490 aa).

173-180 (GGAGVGKT) contacts ATP.

The protein belongs to the ATPase alpha/beta chains family. As to quaternary structure, F-type ATPases have 2 components, CF(1) - the catalytic core - and CF(0) - the membrane proton channel. CF(1) has five subunits: alpha(3), beta(3), gamma(1), delta(1), epsilon(1). CF(0) has three main subunits: a(1), b(2) and c(9-12). The alpha and beta chains form an alternating ring which encloses part of the gamma chain. CF(1) is attached to CF(0) by a central stalk formed by the gamma and epsilon chains, while a peripheral stalk is formed by the delta and b chains.

The protein resides in the cell membrane. The enzyme catalyses ATP + H2O + 4 H(+)(in) = ADP + phosphate + 5 H(+)(out). Functionally, produces ATP from ADP in the presence of a proton gradient across the membrane. The catalytic sites are hosted primarily by the beta subunits. This is ATP synthase subunit beta from Bifidobacterium longum subsp. infantis (strain ATCC 15697 / DSM 20088 / JCM 1222 / NCTC 11817 / S12).